The sequence spans 2343 residues: Pecanex-like protein 1 (2343 aa).

2 consecutive transmembrane segments (helical) span residues 33-53 (ALHL…YMAL) and 57-77 (MIIV…LKMV). Disordered stretches follow at residues 98–163 (FTDQ…GSSR), 271–290 (SHSY…SSSA), 306–691 (QQQR…TRAR), and 749–826 (TRSR…QGQQ). The span at 143–163 (SSRNSYAGLDPSNQIGSGSSR) shows a compositional bias: polar residues. A compositionally biased stretch (basic residues) spans 272-282 (HSYRKEHRPRG). Residues 372-390 (SLRSLSTRSSGSTESYCSG) show a composition bias toward low complexity. The span at 396–412 (NSTLSSYKSEQTSSTHI) shows a compositional bias: polar residues. Basic and acidic residues-rich tracts occupy residues 416–457 (LSEH…DKTA), 507–521 (RPPE…EQGE), and 530–546 (KVCK…DVRP). The span at 556 to 571 (TSAHKPGRRRTGKKRA) shows a compositional bias: basic residues. Low complexity-rich tracts occupy residues 624–637 (SDSS…SCQS), 769–780 (AATGAAQASEEA), and 809–826 (TLLI…QGQQ). 13 consecutive transmembrane segments (helical) span residues 978-998 (FWIL…LLAL), 1009-1029 (ILAV…LIQG), 1034-1054 (IWVF…LKSV), 1068-1088 (IIAY…WLLD), 1118-1138 (LVIV…LPQV), 1162-1182 (LLAA…LYGL), 1195-1215 (HIPV…YHLS), 1268-1288 (LVVC…TVFT), 1296-1316 (YVLY…LPQV), 1406-1426 (SFSS…FFKF), 1434-1454 (TMLL…ELLY), 1458-1478 (FVYT…HAFA), and 1493-1513 (AVVS…AIFI). Residues 2050–2120 (EDSDTGGGTS…VQSSLVRQSP (71 aa)) are disordered. Polar residues-rich tracts occupy residues 2060–2080 (CPAN…QGST) and 2094–2117 (PTTS…SLVR).

This sequence belongs to the pecanex family. In terms of tissue distribution, specifically expressed in the germ line and not in the somatic cells of the testis, reaching its peak at the pachytene stage of the meiotic prophase. Detected in pachytene spermatocytes and round spermatids (at protein level).

The protein localises to the membrane. The sequence is that of Pecanex-like protein 1 from Rattus norvegicus (Rat).